Reading from the N-terminus, the 395-residue chain is Yellow-related salivary protein M35 (395 aa).

Positions 1–18 (MKLILTVLAFLSLQVALS) are cleaved as a signal peptide.

The protein belongs to the major royal jelly protein family. Salivary gland (at protein level).

The protein resides in the secreted. Its function is as follows. Probably modulates blood feeding of sand flies on vertebrate species by binding and sequestering different mediators involved in the host response. Functions as a chemoattractant for host neutrophils; likely acts through a G-protein-coupled receptor and effect is dependent on calcium influx and phosphatidylinositol 3-kinases (PI3K) activity. In terms of biological role, (Microbial infection) Probably enhances infection caused by Leishmania species in the host through augmentation of host neutrophil recruitment into the skin. The protein is Yellow-related salivary protein M35 of Phlebotomus duboscqi (Sandfly).